Here is a 718-residue protein sequence, read N- to C-terminus: Exostosin-2 (718 aa).

At 1-25 the chain is on the cytoplasmic side; that stretch reads MCASVKYNIRGPALIPRMKTKHRIY. A helical; Signal-anchor for type II membrane protein transmembrane segment spans residues 26–46; it reads YITLFSIVLLGLIATGMFQFW. The Lumenal portion of the chain corresponds to 47–718; the sequence is PHSIESSGDW…LKSFPNIGSL (672 aa). Intrachain disulfides connect C85/C90, C96/C151, C286/C300, and C318/C339. N288 is a glycosylation site (N-linked (GlcNAc...) asparagine). UDP-binding residues include L461, R465, N490, and N517. R465, N490, N517, R522, D538, D539, and D540 together coordinate UDP-N-acetyl-alpha-D-glucosamine. UDP-binding residues include D538 and D539. D540 contacts Mn(2+). Y582 and S584 together coordinate a protein. A disulfide bond links C626 and C676. Positions 627 and 628 each coordinate UDP-N-acetyl-alpha-D-glucosamine. N637 carries N-linked (GlcNAc...) asparagine glycosylation. Residues K651 and K653 each coordinate a protein. Position 673 (R673) interacts with UDP-N-acetyl-alpha-D-glucosamine.

Belongs to the glycosyltransferase 47 family. As to quaternary structure, part of the heparan sulfate polymerase, a dimeric complex composed of EXT1 and EXT2. Could also form homooligomeric complexes. Interacts with NDST1. Interacts with GALNT5. Requires Mn(2+) as cofactor. A soluble form is generated by proteolytic processing. Post-translationally, N-glycosylated at Asn-637.

It localises to the golgi apparatus membrane. It is found in the golgi apparatus. The protein resides in the cis-Golgi network membrane. The protein localises to the endoplasmic reticulum membrane. Its subcellular location is the secreted. It carries out the reaction 3-O-{[(1-&gt;4)-beta-D-GlcA-(1-&gt;4)-alpha-D-GlcNAc](n)-(1-&gt;4)-beta-D-GlcA-(1-&gt;3)-beta-D-Gal-(1-&gt;3)-beta-D-Gal-(1-&gt;4)-beta-D-Xyl}-L-seryl-[protein] + UDP-N-acetyl-alpha-D-glucosamine = 3-O-{alpha-D-GlcNAc-[(1-&gt;4)-beta-D-GlcA-(1-&gt;4)-alpha-D-GlcNAc](n)-(1-&gt;4)-beta-D-GlcA-(1-&gt;3)-beta-D-Gal-(1-&gt;3)-beta-D-Gal-(1-&gt;4)-beta-D-Xyl}-L-seryl-[protein] + UDP + H(+). Its pathway is protein modification; protein glycosylation. In terms of biological role, glycosyltransferase forming with EXT1 the heterodimeric heparan sulfate polymerase which catalyzes the elongation of the heparan sulfate glycan backbone. Glycan backbone extension consists in the alternating transfer of (1-&gt;4)-beta-D-GlcA and (1-&gt;4)-alpha-D-GlcNAc residues from their respective UDP-sugar donors. Both EXT1 and EXT2 are required for the full activity of the polymerase since EXT1 bears the N-acetylglucosaminyl-proteoglycan 4-beta-glucuronosyltransferase activity within the complex while EXT2 carries the glucuronosyl-N-acetylglucosaminyl-proteoglycan 4-alpha-N-acetylglucosaminyltransferase activity. Heparan sulfate proteoglycans are ubiquitous components of the extracellular matrix and play an important role in tissue homeostasis and signaling. This Bos taurus (Bovine) protein is Exostosin-2.